The sequence spans 142 residues: Large ribosomal subunit protein uL11 (142 aa).

It belongs to the universal ribosomal protein uL11 family. Part of the ribosomal stalk of the 50S ribosomal subunit. Interacts with L10 and the large rRNA to form the base of the stalk. L10 forms an elongated spine to which L12 dimers bind in a sequential fashion forming a multimeric L10(L12)X complex. In terms of processing, one or more lysine residues are methylated.

In terms of biological role, forms part of the ribosomal stalk which helps the ribosome interact with GTP-bound translation factors. The protein is Large ribosomal subunit protein uL11 of Shewanella oneidensis (strain ATCC 700550 / JCM 31522 / CIP 106686 / LMG 19005 / NCIMB 14063 / MR-1).